The sequence spans 498 residues: Tyrosine 3-monooxygenase (498 aa).

Positions 1–10 (MPTPSASSPQ) are enriched in polar residues. The segment at 1-33 (MPTPSASSPQPKGFRRAVSEQDTKQAEAVTSPR) is disordered. Residues Ser-19 and Ser-31 each carry the phosphoserine modification. Ser-40 bears the Phosphoserine; by CaMK2 and PKA mark. Fe cation contacts are provided by His-331, His-336, and Glu-376. The residue at position 472 (Ser-472) is a Phosphoserine.

The protein belongs to the biopterin-dependent aromatic amino acid hydroxylase family. In terms of assembly, homotetramer. Interacts (when phosphorylated at Ser-19) with YWHAG; one YWHAG dimer bounds to one TH tetramer and this interaction may influence the phosphorylation and dephosphorylation of other sites. Interacts with NT5DC2; the interaction results in reduced phosphorylation and decreased catalytic activity of TH. Fe(2+) is required as a cofactor. Phosphorylated on Ser-19, Ser-31 and Ser-40 by several protein kinases with different site specificities. Phosphorylation at Ser-31 and Ser-40 leads to an increase of TH activity. Phosphorylation at Ser-40 activates the enzyme and also counteracts the feedback inhibition of TH by catecholamines. Phosphorylation of Ser-19 and Ser-31 triggers the proteasomal degradation of TH through the ubiquitin-proteasome pathway. Phosphorylation at Ser-31 facilitates transport of TH from the soma to the nerve terminals via the microtubule network. Phosphorylation at Ser-19 induces the high-affinity binding to the 14-3-3 protein YWHAG; this interaction may influence the phosphorylation and dephosphorylation of other sites. Ser-19 increases the phosphorylation at Ser-40 in a hierarchical manner, leading to increased activity. Expressed in the adrenal gland. Expressed in the retina. Expressed in the in the striatum (at protein level).

The protein localises to the cytoplasm. It is found in the perinuclear region. The protein resides in the nucleus. It localises to the cell projection. Its subcellular location is the axon. The protein localises to the cytoplasmic vesicle. It is found in the secretory vesicle. The protein resides in the synaptic vesicle. It catalyses the reaction (6R)-L-erythro-5,6,7,8-tetrahydrobiopterin + L-tyrosine + O2 = (4aS,6R)-4a-hydroxy-L-erythro-5,6,7,8-tetrahydrobiopterin + L-dopa. The protein operates within catecholamine biosynthesis; dopamine biosynthesis; dopamine from L-tyrosine: step 1/2. Inhibited in feedback fashion by the catecholamine neurotransmitters, especially by dopamine in competition with tetrahydrobiopterin. Phosphorylation of several Ser/Thr residues in the N-terminus regulates the catalytic activity. Ser-31 and Ser-40 are readily phosphorylated to activate the catalytic activity. A Cysteine modification induced by N-ethylmaleimide (NEM), inhibits tyrosine 3-monooxygenase activity through the modification of the Cys-177. Its function is as follows. Catalyzes the conversion of L-tyrosine to L-dihydroxyphenylalanine (L-Dopa), the rate-limiting step in the biosynthesis of catecholamines, dopamine, noradrenaline, and adrenaline. Uses tetrahydrobiopterin and molecular oxygen to convert tyrosine to L-Dopa. In addition to tyrosine, is able to catalyze the hydroxylation of phenylalanine and tryptophan with lower specificity. Positively regulates the regression of retinal hyaloid vessels during postnatal development. This is Tyrosine 3-monooxygenase (Th) from Mus musculus (Mouse).